Reading from the N-terminus, the 267-residue chain is Nanos homolog 1 (267 aa).

Positions 40–56 (FSSWNDYLGLATLITRA) are essential for its translational repressor activity. The tract at residues 57 to 94 (SDRGSPHEGPGPTAAGPTMGPPEDDEDDDGEEPEAGGR) is disordered. The span at 78–90 (PEDDEDDDGEEPE) shows a compositional bias: acidic residues. A Nanos-type zinc finger spans residues 188 to 242 (VCVFCRNNKEAVALYTTHILKGPDGRVLCPVLRRYTCPLCGASGDNAHTIKYCPL). Residues Cys189, Cys192, His205, Cys216, Cys224, Cys227, His235, and Cys240 each coordinate Zn(2+). 2 consecutive short sequence motifs (C2HC) follow at residues 189 to 216 (CVFC…RVLC) and 224 to 240 (CPLC…IKYC). The disordered stretch occupies residues 243–267 (SKVPPPTVRPPPRSNRDSLPSKKLR). The span at 244–255 (KVPPPTVRPPPR) shows a compositional bias: pro residues. Over residues 256-267 (SNRDSLPSKKLR) the composition is skewed to basic and acidic residues.

The protein belongs to the nanos family. As to quaternary structure, interacts with PUM2, SNAPIN and CTNNB1. Interacts (via N-terminal region) with CTNND1. Interacts with DDX20 (via N-terminal region). In terms of tissue distribution, expressed in the oocyte. Transiently expressed in eight-cell embryos. At 12.5 dpc, it is re-expressed in the central nervous system and the expression continues in the adult brain, in which the hippocampal formation is the predominant region. Expressed in the seminiferous tubules of mature testis, but not in the primordial germ cells.

It is found in the cytoplasm. The protein resides in the perinuclear region. Its function is as follows. May act as a translational repressor which regulates translation of specific mRNAs by forming a complex with PUM2 that associates with the 3'-UTR of mRNA targets. Capable of interfering with the proadhesive and anti-invasive functions of E-cadherin. Up-regulates the production of MMP14 to promote tumor cell invasion. Not essential for normal development. The sequence is that of Nanos homolog 1 (Nanos1) from Mus musculus (Mouse).